The primary structure comprises 657 residues: MGGEDYYLELCERPVQFEKANPVNCVFFDEANKQVFAVRSGGATGVVVKGPDDRNPISFRMDDRGEVKCIKFSLENKILAVQRTAKAVDFCNFIPDNSQLEYTQECKTKNANILGFCWTSSTEIVFITDQGIEFYQVMPEKRSLKLLKSHNINVNWYTYCPESAVILLSTTVLENVLQPFHFRAGTMSKLPKFEIELPAAPKSTKLSLSERDIAMATIYGQLYILFLRHHSRTSNSTGAEVVLYHLPREGACKKMHILKLNRTGKFALNVVDNLVVVHHQDTETSVIFDIRLRGEFDGTVTFHHPVLPARSIQPYEIPLAGPAAVTSQSPVPCKLYSSSWIVFQPDIIISASQGYLWNLQVKLQPIVNLLPDKGRLMDFLLQRKECKAVVLSVCSQMLSESDRATLPVIATVFDKLNHEYKKYLDADQSYTMAVEAGQSRSNPPLKRPVRTQAVVDQSDVYTQVLSPFVENKEMPHKFVIAVLMEYIRSLNQFQIPVQHYLHELVIKTLVQHNLFYMLHQFLQYHVLSDSKPLACLLLSLESFYPPAHQLSLDMLKRLSTANDEIVEVLLSKHQVLAALRFIRGIGGHDNISARKFLDAARQTDDVMLFYTIFRFFEQRNQRLRGNPNFTPGEHCEEHVAFFKQVFGEQALMRPTTF.

The region spanning 471–637 (NKEMPHKFVI…NFTPGEHCEE (167 aa)) is the Mic1 domain.

This sequence belongs to the RMC1 family. In terms of assembly, found in a complex with RMC1, CCZ1, MON1A and MON1B. Highly expressed in heart, brain, spleen, lung, liver, skeletal muscle, kidney and testis.

It localises to the lysosome membrane. The protein resides in the late endosome membrane. Component of the CCZ1-MON1 RAB7A guanine exchange factor (GEF). Acts as a positive regulator of CCZ1-MON1A/B function necessary for endosomal/autophagic flux and efficient RAB7A localization. This chain is Regulator of MON1-CCZ1 complex (Rmc1), found in Mus musculus (Mouse).